A 72-amino-acid chain; its full sequence is SRY-related protein AES2 (72 aa).

The HMG box DNA-binding region spans 1-69; the sequence is VKRPMNAFMV…KHMADYPDYK (69 aa).

The protein resides in the nucleus. This chain is SRY-related protein AES2, found in Alligator mississippiensis (American alligator).